The sequence spans 305 residues: MKMAIVGGPTAVGKTDLMVEVCEEINAEIVSMDSRQIYRYMDIGTAKPTPEQRKRVPHHMIDILDPDEYYNAFLYRKDSLKAVEDILKRGKIPVYVGGTGLYADALVRGIFEGVPADENIRKELRELERREPGILRKMLEEFDPEAATRIHPNDLKRTIRALEVYMKTGRRISELQKETKGDDRFFIIVLTRERYDLYDRINRRVDRMVEMGLVDEVKRLLSMGYSKDLNSMKTIGYKEVIEYLEGKYDFEKMVHLIKRNTRHFARRQIIWFKRYENAIWYNLTFVSKEELKKTLKELIVKNFSV.

Residue 8-15 (GPTAVGKT) coordinates ATP. 10 to 15 (TAVGKT) contributes to the substrate binding site. The tract at residues 33–36 (DSRQ) is interaction with substrate tRNA.

This sequence belongs to the IPP transferase family. Monomer. Mg(2+) is required as a cofactor.

The catalysed reaction is adenosine(37) in tRNA + dimethylallyl diphosphate = N(6)-dimethylallyladenosine(37) in tRNA + diphosphate. Its function is as follows. Catalyzes the transfer of a dimethylallyl group onto the adenine at position 37 in tRNAs that read codons beginning with uridine, leading to the formation of N6-(dimethylallyl)adenosine (i(6)A). In Thermotoga neapolitana (strain ATCC 49049 / DSM 4359 / NBRC 107923 / NS-E), this protein is tRNA dimethylallyltransferase.